The following is a 247-amino-acid chain: uncharacterized protein (247 aa).

L11, N85, and K119 together coordinate NADP(+). The Proton donor role is filled by S136. The NADP(+) site is built by Y150, K154, V181, and T183. Y150 functions as the Proton acceptor in the catalytic mechanism. Catalysis depends on K154, which acts as the Lowers pKa of active site Tyr.

This sequence belongs to the short-chain dehydrogenases/reductases (SDR) family.

This is an uncharacterized protein from Schizosaccharomyces pombe (strain 972 / ATCC 24843) (Fission yeast).